The primary structure comprises 244 residues: Ureidoacrylate amidohydrolase RutB (244 aa).

Aspartate 38 acts as the Proton acceptor in catalysis. Residue lysine 147 is part of the active site. Residue cysteine 180 is the Nucleophile of the active site.

It belongs to the isochorismatase family. RutB subfamily.

The catalysed reaction is (Z)-3-ureidoacrylate + H2O + H(+) = (Z)-3-aminoacrylate + NH4(+) + CO2. The enzyme catalyses (Z)-3-ureidoacrylate + H2O = (Z)-3-aminoacrylate + carbamate + H(+). It catalyses the reaction (Z)-2-methylureidoacrylate + H2O + H(+) = (Z)-2-methylaminoacrylate + NH4(+) + CO2. In terms of biological role, hydrolyzes ureidoacrylate to form aminoacrylate and carbamate. The carbamate hydrolyzes spontaneously, thereby releasing one of the nitrogen atoms of the pyrimidine ring as ammonia and one of its carbon atoms as CO2. The sequence is that of Ureidoacrylate amidohydrolase RutB from Escherichia coli O1:K1 / APEC.